The following is a 241-amino-acid chain: 1-(5-phosphoribosyl)-5-[(5-phosphoribosylamino)methylideneamino] imidazole-4-carboxamide isomerase (241 aa).

D7 acts as the Proton acceptor in catalysis. Residue D129 is the Proton donor of the active site.

This sequence belongs to the HisA/HisF family.

The protein localises to the cytoplasm. It catalyses the reaction 1-(5-phospho-beta-D-ribosyl)-5-[(5-phospho-beta-D-ribosylamino)methylideneamino]imidazole-4-carboxamide = 5-[(5-phospho-1-deoxy-D-ribulos-1-ylimino)methylamino]-1-(5-phospho-beta-D-ribosyl)imidazole-4-carboxamide. It participates in amino-acid biosynthesis; L-histidine biosynthesis; L-histidine from 5-phospho-alpha-D-ribose 1-diphosphate: step 4/9. The sequence is that of 1-(5-phosphoribosyl)-5-[(5-phosphoribosylamino)methylideneamino] imidazole-4-carboxamide isomerase from Buchnera aphidicola subsp. Baizongia pistaciae (strain Bp).